The chain runs to 76 residues: MGPMKVLLVMLVVMVAAPHIADARSQPGPTCPSSVQAILCDNRCGRSACSYYIERCACCAKCNRIPYYGASNHPGR.

The signal sequence occupies residues 1 to 23 (MGPMKVLLVMLVVMVAAPHIADA). Cystine bridges form between Cys31-Cys62, Cys40-Cys58, Cys44-Cys56, and Cys49-Cys59. Residue Pro74 is modified to Proline amide; partial.

This sequence belongs to the paralithocin family. The amidated form is probably the active form.

Its function is as follows. Has antibacterial activity, mainly against marine Gram-positive bacteria like C.maltaromaticum (MIC=25 uM), C.mobile (MIC=12.5 uM), C.divergens (MIC=25 uM) and C.funditum (MIC=12.5 uM) but also against C.glutamicum (MIC=12.5 uM). Has very little or no activity against Gram-negative bacteria. The polypeptide is Paralithocin 3 (Paralithodes camtschaticus (Red king crab)).